The primary structure comprises 446 residues: 3',5'-cyclic-AMP phosphodiesterase 7B (446 aa).

The PDEase domain occupies 97-420 (LDEDYLGQAR…AQWKSLLSNQ (324 aa)). H173 serves as the catalytic Proton donor. The a divalent metal cation site is built by H177, H213, D214, and D323. A disordered region spans residues 422–446 (RRRGSGQDLAGPAPETLEQTEGATP). S426 is subject to Phosphoserine. Phosphothreonine is present on T445.

This sequence belongs to the cyclic nucleotide phosphodiesterase family. PDE7 subfamily. A divalent metal cation is required as a cofactor. Highly expressed in brain.

It carries out the reaction 3',5'-cyclic AMP + H2O = AMP + H(+). It functions in the pathway purine metabolism; 3',5'-cyclic AMP degradation; AMP from 3',5'-cyclic AMP: step 1/1. Its activity is regulated as follows. Inhibited by dipyridamole, IBMX and SCH 51866. Insensitive to zaprinast, rolipram, and milrinone. Functionally, hydrolyzes the second messenger cAMP, which is a key regulator of many important physiological processes. May be involved in the control of cAMP-mediated neural activity and cAMP metabolism in the brain. This is 3',5'-cyclic-AMP phosphodiesterase 7B from Mus musculus (Mouse).